We begin with the raw amino-acid sequence, 119 residues long: UPF0102 protein PM0647 (119 aa).

The protein belongs to the UPF0102 family.

The chain is UPF0102 protein PM0647 from Pasteurella multocida (strain Pm70).